A 400-amino-acid chain; its full sequence is Acetate kinase (400 aa).

A Mg(2+)-binding site is contributed by Asn-7. Lys-14 lines the ATP pocket. Position 85 (Arg-85) interacts with substrate. The active-site Proton donor/acceptor is the Asp-142. ATP-binding positions include 202 to 206 (HLGNG), 278 to 280 (DMR), and 326 to 330 (GIGEN). Glu-380 is a Mg(2+) binding site.

The protein belongs to the acetokinase family. Homodimer. Requires Mg(2+) as cofactor. Mn(2+) is required as a cofactor.

It is found in the cytoplasm. The catalysed reaction is acetate + ATP = acetyl phosphate + ADP. It functions in the pathway metabolic intermediate biosynthesis; acetyl-CoA biosynthesis; acetyl-CoA from acetate: step 1/2. Catalyzes the formation of acetyl phosphate from acetate and ATP. Can also catalyze the reverse reaction. This Deinococcus deserti (strain DSM 17065 / CIP 109153 / LMG 22923 / VCD115) protein is Acetate kinase.